A 552-amino-acid polypeptide reads, in one-letter code: Steroid transmembrane transporter SLC22A24 (552 aa).

Transmembrane regions (helical) follow at residues 16–36 (FQIL…PHML), 144–164 (LISV…LIFG), 178–198 (CCLL…TFPV), 204–224 (FLGG…MSEW), 235–255 (GIIL…GFVI), 267–287 (IPLF…QWLI), 350–370 (IFYL…LMLN), 378–398 (IFLF…AVLL), 407–427 (ISQM…IFLS), 435–455 (VALA…HTVH), 469–489 (IGLN…LMIL), and 496–516 (LPWI…LLLP). The interval 524-552 (PNTIQDVENNRRDSRKTKQEDISMKVTQF) is disordered. Positions 531-546 (ENNRRDSRKTKQEDIS) are enriched in basic and acidic residues.

The protein belongs to the major facilitator (TC 2.A.1) superfamily. Organic cation transporter (TC 2.A.1.19) family.

It localises to the cell membrane. It catalyses the reaction estrone 3-sulfate(out) + glutarate(in) = estrone 3-sulfate(in) + glutarate(out). The enzyme catalyses 17beta-estradiol 17-O-(beta-D-glucuronate)(out) + glutarate(in) = 17beta-estradiol 17-O-(beta-D-glucuronate)(in) + glutarate(out). It carries out the reaction taurocholate(out) + glutarate(in) = taurocholate(in) + glutarate(out). The catalysed reaction is glycocholate(out) + glutarate(in) = glycocholate(in) + glutarate(out). It catalyses the reaction dehydroepiandrosterone 3-sulfate(out) + glutarate(in) = dehydroepiandrosterone 3-sulfate(in) + glutarate(out). The enzyme catalyses glutarate(in) + succinate(out) = glutarate(out) + succinate(in). Its function is as follows. Renal transmembrane organic anion/dicarboxylate exchanger that participates in the reabsorption of conjugated steroids, as well as bile acids, driven by an outward gradient of dicarboxylates such as glutarate or succinate. Transports taurocholate, estrone 3-sulfate, and estradiol-17-glucuronide (17beta-estradiol 17-O-(beta-D-glucuronate)), but not androstanediol glucuronide (5alpha-androstane-3alpha,17beta-diol 3-O-(beta-D-glucuronate)). This is Steroid transmembrane transporter SLC22A24 from Equus caballus (Horse).